Reading from the N-terminus, the 752-residue chain is Ribosomal protein S6 kinase 2 alpha (752 aa).

The 260-residue stretch at 80–339 (FELLKVLGQG…AEEIKRHPFY (260 aa)) folds into the Protein kinase 1 domain. ATP is bound by residues 86–94 (LGQGSFGKV) and lysine 112. The active-site Proton acceptor is aspartate 205. A Phosphoserine modification is found at serine 239. In terms of domain architecture, AGC-kinase C-terminal spans 340–409 (STIDWNKLYR…VATGLMEDSK (70 aa)). Phosphothreonine is present on threonine 377. Serine 381 is modified (phosphoserine). Serine 398 carries the post-translational modification Phosphoserine; by autocatalysis. The region spanning 435 to 692 (YVVKEAIGVG…AKQVLQHPWI (258 aa)) is the Protein kinase 2 domain. ATP-binding positions include 441–449 (IGVGSYSVC) and lysine 464. Residue aspartate 552 is the Proton acceptor of the active site. Threonine 590 carries the post-translational modification Phosphothreonine. Serine 749 carries the phosphoserine modification.

This sequence belongs to the protein kinase superfamily. AGC Ser/Thr protein kinase family. S6 kinase subfamily. Mg(2+) is required as a cofactor. In terms of processing, autophosphorylated on Ser-398, as part of the activation process. As to expression, small and large intestine, spleen, stomach, and bursa, and to a lesser extent lung and kidney.

The enzyme catalyses L-seryl-[protein] + ATP = O-phospho-L-seryl-[protein] + ADP + H(+). It catalyses the reaction L-threonyl-[protein] + ATP = O-phospho-L-threonyl-[protein] + ADP + H(+). Activated by multiple phosphorylations on threonine and serine residues. Serine/threonine kinase that may play a role in mediating the growth-factor and stress induced activation of transcription. The sequence is that of Ribosomal protein S6 kinase 2 alpha (RPS6KA) from Gallus gallus (Chicken).